A 103-amino-acid polypeptide reads, in one-letter code: ATP synthase F(0) complex subunit g, mitochondrial (103 aa).

At Ala-2 the chain carries N-acetylalanine. 4 positions are modified to N6-acetyllysine: Lys-11, Lys-24, Lys-35, and Lys-54.

The protein belongs to the ATPase g subunit family. As to quaternary structure, component of the ATP synthase complex composed at least of ATP5F1A/subunit alpha, ATP5F1B/subunit beta, ATP5MC1/subunit c (homooctomer), MT-ATP6/subunit a, MT-ATP8/subunit 8, ATP5ME/subunit e, ATP5MF/subunit f, ATP5MG/subunit g, ATP5MK/subunit k, ATP5MJ/subunit j, ATP5F1C/subunit gamma, ATP5F1D/subunit delta, ATP5F1E/subunit epsilon, ATP5PF/subunit F6, ATP5PB/subunit b, ATP5PD/subunit d, ATP5PO/subunit OSCP. ATP synthase complex consists of a soluble F(1) head domain (subunits alpha(3) and beta(3)) - the catalytic core - and a membrane F(0) domain - the membrane proton channel (subunits c, a, 8, e, f, g, k and j). These two domains are linked by a central stalk (subunits gamma, delta, and epsilon) rotating inside the F1 region and a stationary peripheral stalk (subunits F6, b, d, and OSCP).

The protein localises to the mitochondrion. Its subcellular location is the mitochondrion inner membrane. Functionally, subunit g, of the mitochondrial membrane ATP synthase complex (F(1)F(0) ATP synthase or Complex V) that produces ATP from ADP in the presence of a proton gradient across the membrane which is generated by electron transport complexes of the respiratory chain. ATP synthase complex consist of a soluble F(1) head domain - the catalytic core - and a membrane F(1) domain - the membrane proton channel. These two domains are linked by a central stalk rotating inside the F(1) region and a stationary peripheral stalk. During catalysis, ATP synthesis in the catalytic domain of F(1) is coupled via a rotary mechanism of the central stalk subunits to proton translocation. In vivo, can only synthesize ATP although its ATP hydrolase activity can be activated artificially in vitro. Part of the complex F(0) domain. The polypeptide is ATP synthase F(0) complex subunit g, mitochondrial (Homo sapiens (Human)).